The primary structure comprises 633 residues: MIRITFSAEQKVKEYSGKVTGFDILQPDVLKEAIAFKVNGELHDLSREIEADAEIEVIQLSDEAGLDIIRHDAAHIMAQAVKELFPNTQITIGPTIQDGFYYDFATGRTFTTDDLTAIEKKMKEIVKSNHRFVREVWTRKQAIDFFSDIGEKYKVDIISSIPEGENLTVYRQGDFIDLCRGPHSPSTGRVKAFKLMKVAGAYWRGDAKGPMLQRIYGTAWRNKDELNAYLECLKEAEKRDHRKIAKDMDLFHIQEEAVGQVFWHEQGYILYNVLESYIRKKLINNGYFEVKTPILVSKELWEKSGHWDKFRENMFIVDESESKKLAIKPMNCPCHVQIFNSHTRSYRDLPIRMAEFGTCHRNESSGSLHGLMRVRGFTQDDAHIFCMEEQVNSETIKFCDLLKEVYSELGFNEISVKFSDRPDVRAGDDEVWDRAEKALLEAVKEAGLSYELSPGEGAFYGPKLEFVLKDAIGRSWQCGTLQVDFILPERLGAFYIGADGHKHHPVMLHRAILGTFERFIGILIENYAGKFPVWLAPTQLAILTITNEADGYATKISNVLKEQGVRVKTDLTNEKISYKIRLHSLNKVPILWIVGKNEVTSKTVSVRNLGSERQESFSLEKAIELLLKSINLN.

The TGS domain occupies 1–59 (MIRITFSAEQKVKEYSGKVTGFDILQPDVLKEAIAFKVNGELHDLSREIEADAEIEVIQ). The segment at 240–532 (DHRKIAKDMD…LIENYAGKFP (293 aa)) is catalytic. Zn(2+) contacts are provided by C332, H383, and H509.

The protein belongs to the class-II aminoacyl-tRNA synthetase family. As to quaternary structure, homodimer. Zn(2+) serves as cofactor.

The protein resides in the cytoplasm. It carries out the reaction tRNA(Thr) + L-threonine + ATP = L-threonyl-tRNA(Thr) + AMP + diphosphate + H(+). Catalyzes the attachment of threonine to tRNA(Thr) in a two-step reaction: L-threonine is first activated by ATP to form Thr-AMP and then transferred to the acceptor end of tRNA(Thr). Also edits incorrectly charged L-seryl-tRNA(Thr). This Wolbachia sp. subsp. Drosophila simulans (strain wRi) protein is Threonine--tRNA ligase.